The following is a 115-amino-acid chain: MEILDKQAFFETREKLYTLSRSLNIIKQRIQIAENDRKKCLITINELESLSSETKTYKAVGKMFVISPMTSLKTELKQQVQKDEEDVKGLINQSKYIDAQITDTERSLNELVRKK.

The protein belongs to the prefoldin subunit beta family. In terms of assembly, heterohexamer of two PFD-alpha type and four PFD-beta type subunits.

Functionally, binds specifically to cytosolic chaperonin (c-CPN) and transfers target proteins to it. Binds to nascent polypeptide chain and promotes folding in an environment in which there are many competing pathways for nonnative proteins. This Dictyostelium discoideum (Social amoeba) protein is Probable prefoldin subunit 1 (pfdn1).